Consider the following 581-residue polypeptide: Proline--tRNA ligase (581 aa).

This sequence belongs to the class-II aminoacyl-tRNA synthetase family. ProS type 1 subfamily. Homodimer.

The protein resides in the cytoplasm. The catalysed reaction is tRNA(Pro) + L-proline + ATP = L-prolyl-tRNA(Pro) + AMP + diphosphate. Catalyzes the attachment of proline to tRNA(Pro) in a two-step reaction: proline is first activated by ATP to form Pro-AMP and then transferred to the acceptor end of tRNA(Pro). As ProRS can inadvertently accommodate and process non-cognate amino acids such as alanine and cysteine, to avoid such errors it has two additional distinct editing activities against alanine. One activity is designated as 'pretransfer' editing and involves the tRNA(Pro)-independent hydrolysis of activated Ala-AMP. The other activity is designated 'posttransfer' editing and involves deacylation of mischarged Ala-tRNA(Pro). The misacylated Cys-tRNA(Pro) is not edited by ProRS. This is Proline--tRNA ligase from Polaromonas naphthalenivorans (strain CJ2).